The primary structure comprises 142 residues: Large ribosomal subunit protein uL11 (142 aa).

It belongs to the universal ribosomal protein uL11 family. In terms of assembly, part of the ribosomal stalk of the 50S ribosomal subunit. Interacts with L10 and the large rRNA to form the base of the stalk. L10 forms an elongated spine to which L12 dimers bind in a sequential fashion forming a multimeric L10(L12)X complex. Post-translationally, one or more lysine residues are methylated.

Functionally, forms part of the ribosomal stalk which helps the ribosome interact with GTP-bound translation factors. The sequence is that of Large ribosomal subunit protein uL11 from Rhodopseudomonas palustris (strain BisA53).